A 209-amino-acid polypeptide reads, in one-letter code: Ribosomal RNA large subunit methyltransferase E (209 aa).

S-adenosyl-L-methionine contacts are provided by Gly-63, Trp-65, Asp-83, Asp-99, and Asp-124. Catalysis depends on Lys-164, which acts as the Proton acceptor.

This sequence belongs to the class I-like SAM-binding methyltransferase superfamily. RNA methyltransferase RlmE family.

Its subcellular location is the cytoplasm. It catalyses the reaction uridine(2552) in 23S rRNA + S-adenosyl-L-methionine = 2'-O-methyluridine(2552) in 23S rRNA + S-adenosyl-L-homocysteine + H(+). In terms of biological role, specifically methylates the uridine in position 2552 of 23S rRNA at the 2'-O position of the ribose in the fully assembled 50S ribosomal subunit. This chain is Ribosomal RNA large subunit methyltransferase E, found in Pectobacterium atrosepticum (strain SCRI 1043 / ATCC BAA-672) (Erwinia carotovora subsp. atroseptica).